We begin with the raw amino-acid sequence, 299 residues long: MMGKEEEIARIARRLDKMVTKKSAEGAMDLLRELKAMPITLHLLQSTRVGMSVNALRKQSSDEEVIALAKSLIKSWKKLLDASDAKARERGRGMPLPTSSRDASEAPDPSRKRPELPRAPSTPRITTFPPVPVTCDAVRNKCREMLTAALQTDHDHVAIGADCERLSAQIEECIFRDVGNTDMKYKNRVRSRISNLKDAKNPDLRRNVLCGAITPQQIAVMTSEEMASDELKEIRKAMTKEAIREHQMARTGGTQTDLFTCGKCRKKNCTYTQVQTRSSDEPMTTFVVCNECGNRWKFC.

A TFIIS N-terminal domain is found at 6–83; sequence EEIARIARRL…KSWKKLLDAS (78 aa). Lys58 is covalently cross-linked (Glycyl lysine isopeptide (Lys-Gly) (interchain with G-Cter in ubiquitin)). A phosphoserine mark is found at Ser60 and Ser100. A disordered region spans residues 86 to 128; it reads KARERGRGMPLPTSSRDASEAPDPSRKRPELPRAPSTPRITTF. A compositionally biased stretch (basic and acidic residues) spans 102-116; the sequence is DASEAPDPSRKRPEL. In terms of domain architecture, TFIIS central spans 138–254; the sequence is VRNKCREMLT…EHQMARTGGT (117 aa). The segment at 257–297 adopts a TFIIS-type zinc-finger fold; the sequence is DLFTCGKCRKKNCTYTQVQTRSSDEPMTTFVVCNECGNRWK. Cys261, Cys264, Cys289, and Cys292 together coordinate Zn(2+).

This sequence belongs to the TFS-II family. In terms of assembly, interacts with the basal transcription factor GTF2B. Interacts with REXO1. In terms of tissue distribution, testis and ovary specific.

The protein localises to the nucleus. In terms of biological role, necessary for efficient RNA polymerase II transcription elongation past template-encoded arresting sites. The arresting sites in DNA have the property of trapping a certain fraction of elongating RNA polymerases that pass through, resulting in locked ternary complexes. Cleavage of the nascent transcript by S-II allows the resumption of elongation from the new 3'-terminus. The chain is Transcription elongation factor A protein 2 (TCEA2) from Homo sapiens (Human).